A 622-amino-acid polypeptide reads, in one-letter code: DNA mismatch repair protein MutL (622 aa).

The disordered stretch occupies residues Arg376–Met401.

The protein belongs to the DNA mismatch repair MutL/HexB family.

In terms of biological role, this protein is involved in the repair of mismatches in DNA. It is required for dam-dependent methyl-directed DNA mismatch repair. May act as a 'molecular matchmaker', a protein that promotes the formation of a stable complex between two or more DNA-binding proteins in an ATP-dependent manner without itself being part of a final effector complex. This is DNA mismatch repair protein MutL from Aeromonas hydrophila subsp. hydrophila (strain ATCC 7966 / DSM 30187 / BCRC 13018 / CCUG 14551 / JCM 1027 / KCTC 2358 / NCIMB 9240 / NCTC 8049).